The following is a 594-amino-acid chain: Probable pectinesterase/pectinesterase inhibitor 33 (594 aa).

The first 22 residues, 1 to 22 (MLRGIFHICLLASFLLLPFSSA), serve as a signal peptide directing secretion. The tract at residues 28 to 75 (FTGGTDAPPPWDHNVSPPPETAPSPTPTSSPSTTSPPSPGPVAAPSPI) is disordered. Residues 34 to 71 (APPPWDHNVSPPPETAPSPTPTSSPSTTSPPSPGPVAA) show a composition bias toward pro residues. Asn77, Asn170, Asn213, and Asn226 each carry an N-linked (GlcNAc...) asparagine glycan. Residues 78–237 (GSVSGDMTWW…SDLIGNCLAV (160 aa)) are pectinesterase inhibitor 33. The pectinesterase 33 stretch occupies residues 280–581 (HLVVAQDRSG…TVGSLIAGGS (302 aa)). Substrate is bound by residues Thr356 and Gln386. Catalysis depends on Asp409, which acts as the Proton donor; for pectinesterase activity. Cys423 and Cys443 are joined by a disulfide. Asp430 (nucleophile; for pectinesterase activity) is an active-site residue. The substrate site is built by Arg498 and Trp500.

It in the N-terminal section; belongs to the PMEI family. The protein in the C-terminal section; belongs to the pectinesterase family. As to expression, expressed in siliques.

It is found in the secreted. Its subcellular location is the cell wall. The catalysed reaction is [(1-&gt;4)-alpha-D-galacturonosyl methyl ester](n) + n H2O = [(1-&gt;4)-alpha-D-galacturonosyl](n) + n methanol + n H(+). It participates in glycan metabolism; pectin degradation; 2-dehydro-3-deoxy-D-gluconate from pectin: step 1/5. In terms of biological role, acts in the modification of cell walls via demethylesterification of cell wall pectin. In Arabidopsis thaliana (Mouse-ear cress), this protein is Probable pectinesterase/pectinesterase inhibitor 33 (PME33).